A 256-amino-acid chain; its full sequence is tRNA pseudouridine synthase A 1 (256 aa).

The active-site Nucleophile is aspartate 53. Tyrosine 111 contributes to the substrate binding site.

This sequence belongs to the tRNA pseudouridine synthase TruA family. As to quaternary structure, homodimer.

The enzyme catalyses uridine(38/39/40) in tRNA = pseudouridine(38/39/40) in tRNA. Its function is as follows. Formation of pseudouridine at positions 38, 39 and 40 in the anticodon stem and loop of transfer RNAs. The protein is tRNA pseudouridine synthase A 1 of Protochlamydia amoebophila (strain UWE25).